Here is a 117-residue protein sequence, read N- to C-terminus: Large ribosomal subunit protein bL20 (117 aa).

The protein belongs to the bacterial ribosomal protein bL20 family.

Functionally, binds directly to 23S ribosomal RNA and is necessary for the in vitro assembly process of the 50S ribosomal subunit. It is not involved in the protein synthesizing functions of that subunit. The chain is Large ribosomal subunit protein bL20 from Geotalea uraniireducens (strain Rf4) (Geobacter uraniireducens).